Consider the following 306-residue polypeptide: 2-phospho-L-lactate transferase (306 aa).

Residues aspartate 54 and arginine 93 each contribute to the 7,8-didemethyl-8-hydroxy-5-deazariboflavin site.

The protein belongs to the CofD family. Homodimer. Mg(2+) is required as a cofactor.

The catalysed reaction is (2S)-lactyl-2-diphospho-5'-guanosine + 7,8-didemethyl-8-hydroxy-5-deazariboflavin = oxidized coenzyme F420-0 + GMP + H(+). The protein operates within cofactor biosynthesis; coenzyme F420 biosynthesis. Catalyzes the transfer of the 2-phospholactate moiety from (2S)-lactyl-2-diphospho-5'-guanosine to 7,8-didemethyl-8-hydroxy-5-deazariboflavin (FO) with the formation of oxidized coenzyme F420-0 and GMP. This Methanothermobacter thermautotrophicus (strain ATCC 29096 / DSM 1053 / JCM 10044 / NBRC 100330 / Delta H) (Methanobacterium thermoautotrophicum) protein is 2-phospho-L-lactate transferase.